Reading from the N-terminus, the 450-residue chain is Tubulin alpha chain (450 aa).

Q11 contributes to the GTP binding site. K40 is subject to N6-acetyllysine. GTP is bound by residues E71, S140, G144, T145, T179, N206, and N228. E71 provides a ligand contact to Mg(2+). E254 is a catalytic residue.

Belongs to the tubulin family. In terms of assembly, dimer of alpha and beta chains. A typical microtubule is a hollow water-filled tube with an outer diameter of 25 nm and an inner diameter of 15 nM. Alpha-beta heterodimers associate head-to-tail to form protofilaments running lengthwise along the microtubule wall with the beta-tubulin subunit facing the microtubule plus end conferring a structural polarity. Microtubules usually have 13 protofilaments but different protofilament numbers can be found in some organisms and specialized cells. It depends on Mg(2+) as a cofactor. In terms of processing, acetylation of alpha chains at Lys-40 stabilizes microtubules and affects affinity and processivity of microtubule motors. This modification has a role in multiple cellular functions, ranging from cell motility, cell cycle progression or cell differentiation to intracellular trafficking and signaling.

It is found in the cytoplasm. The protein localises to the cytoskeleton. It carries out the reaction GTP + H2O = GDP + phosphate + H(+). Functionally, tubulin is the major constituent of microtubules, a cylinder consisting of laterally associated linear protofilaments composed of alpha- and beta-tubulin heterodimers. Microtubules grow by the addition of GTP-tubulin dimers to the microtubule end, where a stabilizing cap forms. Below the cap, tubulin dimers are in GDP-bound state, owing to GTPase activity of alpha-tubulin. The sequence is that of Tubulin alpha chain from Tyrophagus putrescentiae (Mold mite).